Reading from the N-terminus, the 147-residue chain is C-glycoside deglycosidase beta subunit (147 aa).

This sequence belongs to the C-glycoside deglycosidase beta subunit family. In terms of assembly, heterooctamer composed of four alpha subunits (DfgA) and four beta subunits (DfgB). Mn(2+) is required as a cofactor.

The catalysed reaction is 3''-dehydroisoorientin = 1,5-anhydro-D-erythro-hex-1-en-3-ulose + luteolin. It catalyses the reaction 3''-dehydroisovitexin = 1,5-anhydro-D-erythro-hex-1-en-3-ulose + apigenin. With respect to regulation, activity is strongly reduced in the presence of chelating agents. Its function is as follows. Carbon-carbon bond-cleaving enzyme which participates in the metabolism of C-glycosides. Acts on the C6-glycosylated compounds 3''-dehydroisoorientin (3''-oxo-homoorientin) and 3''-dehydroisovitexin (3''-oxo-isovitexin). The chain is C-glycoside deglycosidase beta subunit from Eubacterium cellulosolvens (strain ATCC 43171 / JCM 9499 / 6) (Cillobacterium cellulosolvens).